The chain runs to 495 residues: MAKLSSLLNPIISKILEIYVYSWYSGISKDALFPSQCEQVGGSIVHELEKRLSRQDAMDLLFYEIPFLLIKHIENTEEAKLRFALPQGQILEIDTIYHSLHPHIALEKEENELVYCRLLVEDILKYLLPATNSKSEIECVILREALAVQIHKSIQVASSPETMYKFIIYLSKAILQPSRRPWKESITTAVRWVWHAFRILLITRGVPYFSTAWFQFYLKLFSQKDNVSSSDLTRWFFFYTLLYPWIALVSAFVAETMTLCCIVTIFYDKNVNRQWKQYILTSVSNMDKGNPSGGSQSTNVTTFRRFSQSSYPRRSNYRRRISTSSKSLYELSPSKFKSIPITSNPPPMLNLSKGSTSVEPTFCETNASVALSTVTSTPVFSTDSSPLSSRTRENLLSLIPSAVSSPTKANTNKSHQRSFSIPKATKDSQTPSENSAATLKQAAIDAYSQIPVIPFFLPSDKLIMLVESEYRNKHIFYSLLNSFTMVMFPELRHTK.

A PXA domain is found at 1–174 (MAKLSSLLNP…KFIIYLSKAI (174 aa)). The next 2 membrane-spanning stretches (helical) occupy residues 7–27 (LLNP…YSGI) and 235–255 (WFFF…FVAE). Composition is skewed to polar residues over residues 402 to 419 (AVSS…QRSF) and 427 to 436 (DSQTPSENSA). Residues 402–436 (AVSSPTKANTNKSHQRSFSIPKATKDSQTPSENSA) are disordered. The chain crosses the membrane as a helical span at residues 446 to 466 (AYSQIPVIPFFLPSDKLIMLV).

The protein resides in the endosome membrane. Required for required for normal vacuolar morphology and for vacuolar protein transport. Also required for endosome-to-Golgi protein transport. This chain is PXA domain protein 1 (pxa1), found in Schizosaccharomyces pombe (strain 972 / ATCC 24843) (Fission yeast).